The sequence spans 350 residues: Protein-glutamate methylesterase/protein-glutamine glutaminase (350 aa).

The 118-residue stretch at 5-122 (KVLCVDDSAL…RDGLIEYSEV (118 aa)) folds into the Response regulatory domain. Asp-56 is subject to 4-aspartylphosphate. A CheB-type methylesterase domain is found at 152–346 (PFASSEKLVI…ERILTRLGDR (195 aa)). Catalysis depends on residues Ser-165, His-191, and Asp-288.

This sequence belongs to the CheB family. In terms of processing, phosphorylated by CheA. Phosphorylation of the N-terminal regulatory domain activates the methylesterase activity.

It localises to the cytoplasm. The enzyme catalyses [protein]-L-glutamate 5-O-methyl ester + H2O = L-glutamyl-[protein] + methanol + H(+). It catalyses the reaction L-glutaminyl-[protein] + H2O = L-glutamyl-[protein] + NH4(+). Its function is as follows. Involved in chemotaxis. Part of a chemotaxis signal transduction system that modulates chemotaxis in response to various stimuli. Catalyzes the demethylation of specific methylglutamate residues introduced into the chemoreceptors (methyl-accepting chemotaxis proteins or MCP) by CheR. Also mediates the irreversible deamidation of specific glutamine residues to glutamic acid. This chain is Protein-glutamate methylesterase/protein-glutamine glutaminase, found in Bordetella parapertussis (strain 12822 / ATCC BAA-587 / NCTC 13253).